A 317-amino-acid chain; its full sequence is Glutaminase (317 aa).

Ser67, Asn118, Glu162, Asn169, Tyr193, Tyr245, and Val263 together coordinate substrate.

This sequence belongs to the glutaminase family. In terms of assembly, homotetramer.

The enzyme catalyses L-glutamine + H2O = L-glutamate + NH4(+). This is Glutaminase from Brucella canis (strain ATCC 23365 / NCTC 10854 / RM-666).